Here is a 58-residue protein sequence, read N- to C-terminus: Ribosome biogenesis protein Nop10 (58 aa).

It belongs to the NOP10 family.

In terms of biological role, involved in ribosome biogenesis; more specifically in 18S rRNA pseudouridylation and in cleavage of pre-rRNA. This is Ribosome biogenesis protein Nop10 from Methanobrevibacter smithii (strain ATCC 35061 / DSM 861 / OCM 144 / PS).